The sequence spans 401 residues: Probable sodium/metabolite cotransporter BASS1, chloroplastic (401 aa).

The N-terminal 70 residues, 1–70 (MASAISLSLL…RRSRFDFVPR (70 aa)), are a transit peptide targeting the chloroplast. 9 helical membrane-spanning segments follow: residues 92-112 (FVGE…CLLG), 122-142 (VTPN…GMTL), 156-176 (ELFA…FFVS), 187-207 (AGLI…VTYI), 212-232 (VALS…MTPL), 247-267 (LGLL…GAFL), 278-298 (VSPV…GYAI), 311-331 (QVVL…YLFS), and 371-391 (VPCA…AGIW).

This sequence belongs to the bile acid:sodium symporter (BASS) (TC 2.A.28) family.

It localises to the membrane. It is found in the plastid. The protein localises to the chloroplast envelope. In terms of biological role, may function as sodium-coupled metabolite transporter across the chloroplast envelope. The sequence is that of Probable sodium/metabolite cotransporter BASS1, chloroplastic (BASS1) from Arabidopsis thaliana (Mouse-ear cress).